The sequence spans 454 residues: T-box protein VegT (454 aa).

The segment at residues 57 to 230 (LWSQFHQEGT…HNPFAKGFRE (174 aa)) is a DNA-binding region (T-box). Over residues 229–241 (REQERSHKRDDVL) the composition is skewed to basic and acidic residues. Disordered regions lie at residues 229–274 (REQE…ATRV) and 295–358 (ANQG…VPDS). Residues 308–325 (GVNQEQQVPTSSLNFYNK) are compositionally biased toward polar residues.

As to quaternary structure, forms a repression complex on the promoters of the nodal/nr1 and siamois genes with the maternal factors tcf7l1/tcf3 and pouf5.1/oct-25. Interacts (via C-terminus) with tcf7l1/tcf3 (via N-terminus). Also interacts with the other POU-domain transcription factors pou5f1.2/oct-91 and pou5f1.3/oct-60.

It is found in the nucleus. Its function is as follows. Transcription factor required for both mesoderm and endoderm formation in the embryo; signaling determinants and concentration levels may determine which germ layer is formed. Acts together with beta-catenin to activate genes that are responsible for mesoderm induction including wnt-8, eomes t/bra, siamois, mix1 and sox17. Directly binds to promoter DNA. Patterns the mesoderm along the dorsoventral and posterior axis. Activates siamois gene transcription when alone or in combination with beta-catenin, but inhibits siamois transcription in combination with pou5f1.1/oct-25. This is T-box protein VegT from Xenopus borealis (Kenyan clawed frog).